A 120-amino-acid polypeptide reads, in one-letter code: uncharacterized protein (120 aa).

The protein to phage T4 y06Q.

This is an uncharacterized protein from Escherichia coli (strain K12).